Reading from the N-terminus, the 412-residue chain is Branched-chain alpha-ketoacid dehydrogenase kinase (412 aa).

The N-terminal 30 residues, 1–30, are a transit peptide targeting the mitochondrion; sequence MILTSVLGSGPRSGSSLWPLLGSSLSLRVR. Ser31 is subject to Phosphoserine. Residues 159–404 form the Histidine kinase domain; sequence LDDHKDVVTL…DVYLRLRHID (246 aa). Residues Lys192 and Lys233 each carry the N6-acetyllysine modification. The ATP site is built by Asn279 and Asp315. Asn279 is a Mg(2+) binding site. K(+) contacts are provided by Val328, Asp330, and Phe333. ATP contacts are provided by Thr334 and Thr335. Residues Ser356 and Ser360 each carry the phosphoserine modification. 3 residues coordinate ATP: His364, Gly367, and Leu370. Residue Gly367 coordinates K(+).

This sequence belongs to the PDK/BCKDK protein kinase family. In terms of assembly, homodimer. Homotetramer. Dimerizes through interaction of two opposing nucleotide-binding domains. Interacts with E2 component of the branched-chain alpha-ketoacid dehydrogenase (BCKDH) complex. Competes with BCKDK for binding to the E2 component; this interaction is modulated by branched-chain alpha-keto acids. At steady state, BCKDH holoenzyme contains BCKDK and BCKDHA is phosphorylated. In response to high levels of branched-chain alpha-keto acids, the inhibitory BCKDK is replaced by activating PPM1K leading to BCKDHA dephosphorylation and BCAA degradation. In terms of processing, autophosphorylated. In terms of tissue distribution, expressed in heart and liver.

It localises to the mitochondrion matrix. Its subcellular location is the mitochondrion. The enzyme catalyses L-seryl-[3-methyl-2-oxobutanoate dehydrogenase] + ATP = O-phospho-L-seryl-[3-methyl-2-oxobutanoate dehydrogenase] + ADP + H(+). The catalysed reaction is L-seryl-[protein] + ATP = O-phospho-L-seryl-[protein] + ADP + H(+). The ATP-ase activity is up-regulated by potassium and rubidium ions but not by sodium ions. Up-regulated in the presence of apo- or lipoylated-DBT/E2b subunit of the BCKDH complex. Its function is as follows. Serine/threonine-protein kinase component of macronutrients metabolism. Forms a functional kinase and phosphatase pair with PPM1K, serving as a metabolic regulatory node that coordinates branched-chain amino acids (BCAAs) with glucose and lipid metabolism via two distinct phosphoprotein targets: mitochondrial BCKDHA subunit of the branched-chain alpha-ketoacid dehydrogenase (BCKDH) complex and cytosolic ACLY, a lipogenic enzyme of Krebs cycle. Phosphorylates and inactivates mitochondrial BCKDH complex a multisubunit complex consisting of three multimeric components each involved in different steps of BCAA catabolism: E1 composed of BCKDHA and BCKDHB, E2 core composed of DBT monomers, and E3 composed of DLD monomers. Associates with the E2 component of BCKDH complex and phosphorylates BCKDHA on Ser-333, leading to conformational changes that interrupt substrate channeling between E1 and E2 and inactivates the BCKDH complex. phosphorylates ACLY on Ser-455 in response to changes in cellular carbohydrate abundance such as occurs during fasting to feeding metabolic transition. Refeeding stimulates MLXIPL/ChREBP transcription factor, leading to increased BCKDK to PPM1K expression ratio, phosphorylation and activation of ACLY that ultimately results in the generation of malonyl-CoA and oxaloacetate immediate substrates of de novo lipogenesis and glucogenesis, respectively. Recognizes phosphosites having SxxE/D canonical motif. The chain is Branched-chain alpha-ketoacid dehydrogenase kinase (Bckdk) from Rattus norvegicus (Rat).